The chain runs to 362 residues: Caveolae-associated protein 4 (362 aa).

The interval 1–24 is disordered; that stretch reads MEHNGSASNAGKIHQNRLSSVTED. Residues 100-120 are a coiled coil; that stretch reads IKDVKARVEKQQVRVTKVETK. A phosphoserine mark is found at Ser152, Ser171, and Ser172. 3 stretches are compositionally biased toward basic and acidic residues: residues 230–255, 275–289, and 305–320; these read RERLRQSGERLRQSGERLRQSGERFK, KAKDPKAEGQEVDRG, and HEFHSDEFSETEKEVT. 2 disordered regions span residues 230-289 and 305-346; these read RERL…VDRG and HEFH…KPQV. A Phosphotyrosine modification is found at Tyr324. Residue Thr334 is modified to Phosphothreonine. Ser353 is subject to Phosphoserine.

This sequence belongs to the CAVIN family. In terms of assembly, component of the CAVIN complex composed of CAVIN1, CAVIN2, CAVIN3 and CAVIN4. Interacts with CAVIN1. Interacts with CAVIN2; this augments the transactivation of NPPA. Interacts with CAV3, ADRA1A, ADRA1B, MAPK1 and MAPK3. In terms of tissue distribution, abundantly expressed in cardiac and skeletal muscle (at protein level). Weaker expression in aorta and lung. In heart, expressed in cardiomyocytes and vascular smooth muscle cells but not in other surrounding cells including vascular endothelial cells.

Its subcellular location is the cytoplasm. It localises to the myofibril. The protein localises to the sarcomere. The protein resides in the cytosol. It is found in the membrane. Its subcellular location is the caveola. It localises to the cell membrane. The protein localises to the sarcolemma. In terms of biological role, modulates the morphology of formed caveolae in cardiomyocytes, but is not required for caveolar formation. Facilitates the recruitment of MAPK1/3 to caveolae within cardiomyocytes and regulates alpha-1 adrenergic receptor-induced hypertrophic responses in cardiomyocytes through MAPK1/3 activation. Contributes to proper membrane localization and stabilization of caveolin-3 (CAV3) in cardiomyocytes. Induces RHOA activation and activates NPPA transcription and myofibrillar organization through the Rho/ROCK signaling pathway. This chain is Caveolae-associated protein 4 (Cavin4), found in Mus musculus (Mouse).